Reading from the N-terminus, the 382-residue chain is Toluene efflux pump periplasmic linker protein TtgD (382 aa).

The N-terminal stretch at 1–23 is a signal peptide; sequence MRLERALRARQLIPLAAIWLLVG. Residue Cys24 is the site of N-palmitoyl cysteine attachment. A lipid anchor (S-diacylglycerol cysteine) is attached at Cys24. Residues 100–136 are a coiled coil; the sequence is YEALLARAEASLLTAQNLARRYERLLDTNAISQQQYD.

This sequence belongs to the membrane fusion protein (MFP) (TC 8.A.1) family.

The protein resides in the cell inner membrane. The periplasmic linker protein component of an inducible organic solvent efflux pump. Involved in export of toluene and styrene but not of m-xylene, propylbenzene or ethylbenzene. Is not involved in antibiotic or AMP efflux. This Pseudomonas putida (strain DOT-T1E) protein is Toluene efflux pump periplasmic linker protein TtgD (ttgD).